Reading from the N-terminus, the 160-residue chain is 2-C-methyl-D-erythritol 2,4-cyclodiphosphate synthase (160 aa).

Residues aspartate 9 and histidine 11 each coordinate a divalent metal cation. 4-CDP-2-C-methyl-D-erythritol 2-phosphate is bound by residues 9–11 and 35–36; these read DVH and HS. Histidine 43 serves as a coordination point for a divalent metal cation. Residues 57–59, 62–66, and phenylalanine 140 contribute to the 4-CDP-2-C-methyl-D-erythritol 2-phosphate site; these read DIG and FPDND.

This sequence belongs to the IspF family. As to quaternary structure, homotrimer. It depends on a divalent metal cation as a cofactor.

The enzyme catalyses 4-CDP-2-C-methyl-D-erythritol 2-phosphate = 2-C-methyl-D-erythritol 2,4-cyclic diphosphate + CMP. The protein operates within isoprenoid biosynthesis; isopentenyl diphosphate biosynthesis via DXP pathway; isopentenyl diphosphate from 1-deoxy-D-xylulose 5-phosphate: step 4/6. In terms of biological role, involved in the biosynthesis of isopentenyl diphosphate (IPP) and dimethylallyl diphosphate (DMAPP), two major building blocks of isoprenoid compounds. Catalyzes the conversion of 4-diphosphocytidyl-2-C-methyl-D-erythritol 2-phosphate (CDP-ME2P) to 2-C-methyl-D-erythritol 2,4-cyclodiphosphate (ME-CPP) with a corresponding release of cytidine 5-monophosphate (CMP). The sequence is that of 2-C-methyl-D-erythritol 2,4-cyclodiphosphate synthase from Fusobacterium nucleatum subsp. nucleatum (strain ATCC 25586 / DSM 15643 / BCRC 10681 / CIP 101130 / JCM 8532 / KCTC 2640 / LMG 13131 / VPI 4355).